The primary structure comprises 227 residues: Cytochrome c oxidase subunit 2 (227 aa).

Residues Met1 to Ser14 lie on the Mitochondrial intermembrane side of the membrane. Residues Pro15–Met45 form a helical membrane-spanning segment. Residues Leu46–Gln59 are Mitochondrial matrix-facing. Residues Glu60–Met87 traverse the membrane as a helical segment. Topologically, residues Asp88–Ile227 are mitochondrial intermembrane. 6 residues coordinate Cu cation: His161, Cys196, Glu198, Cys200, His204, and Met207. Glu198 is a binding site for Mg(2+).

It belongs to the cytochrome c oxidase subunit 2 family. In terms of assembly, component of the cytochrome c oxidase (complex IV, CIV), a multisubunit enzyme composed of 14 subunits. The complex is composed of a catalytic core of 3 subunits MT-CO1, MT-CO2 and MT-CO3, encoded in the mitochondrial DNA, and 11 supernumerary subunits COX4I, COX5A, COX5B, COX6A, COX6B, COX6C, COX7A, COX7B, COX7C, COX8 and NDUFA4, which are encoded in the nuclear genome. The complex exists as a monomer or a dimer and forms supercomplexes (SCs) in the inner mitochondrial membrane with NADH-ubiquinone oxidoreductase (complex I, CI) and ubiquinol-cytochrome c oxidoreductase (cytochrome b-c1 complex, complex III, CIII), resulting in different assemblies (supercomplex SCI(1)III(2)IV(1) and megacomplex MCI(2)III(2)IV(2)). Found in a complex with TMEM177, COA6, COX18, COX20, SCO1 and SCO2. Interacts with TMEM177 in a COX20-dependent manner. Interacts with COX20. Interacts with COX16. Requires Cu cation as cofactor.

It localises to the mitochondrion inner membrane. It carries out the reaction 4 Fe(II)-[cytochrome c] + O2 + 8 H(+)(in) = 4 Fe(III)-[cytochrome c] + 2 H2O + 4 H(+)(out). Its function is as follows. Component of the cytochrome c oxidase, the last enzyme in the mitochondrial electron transport chain which drives oxidative phosphorylation. The respiratory chain contains 3 multisubunit complexes succinate dehydrogenase (complex II, CII), ubiquinol-cytochrome c oxidoreductase (cytochrome b-c1 complex, complex III, CIII) and cytochrome c oxidase (complex IV, CIV), that cooperate to transfer electrons derived from NADH and succinate to molecular oxygen, creating an electrochemical gradient over the inner membrane that drives transmembrane transport and the ATP synthase. Cytochrome c oxidase is the component of the respiratory chain that catalyzes the reduction of oxygen to water. Electrons originating from reduced cytochrome c in the intermembrane space (IMS) are transferred via the dinuclear copper A center (CU(A)) of subunit 2 and heme A of subunit 1 to the active site in subunit 1, a binuclear center (BNC) formed by heme A3 and copper B (CU(B)). The BNC reduces molecular oxygen to 2 water molecules using 4 electrons from cytochrome c in the IMS and 4 protons from the mitochondrial matrix. This chain is Cytochrome c oxidase subunit 2 (MT-CO2), found in Oryctolagus cuniculus (Rabbit).